We begin with the raw amino-acid sequence, 451 residues long: tRNA modification GTPase MnmE (451 aa).

Positions 23, 80, and 119 each coordinate (6S)-5-formyl-5,6,7,8-tetrahydrofolate. Residues 215–372 form the TrmE-type G domain; the sequence is GIKVVLTGQP…LRTVLLKTVG (158 aa). N225 is a binding site for K(+). Residues 225–230, 244–250, and 269–272 each bind GTP; these read NVGKSS, TEIPGTT, and DTAG. S229 is a binding site for Mg(2+). 3 residues coordinate K(+): T244, I246, and T249. Mg(2+) is bound at residue T250. K451 contributes to the (6S)-5-formyl-5,6,7,8-tetrahydrofolate binding site.

It belongs to the TRAFAC class TrmE-Era-EngA-EngB-Septin-like GTPase superfamily. TrmE GTPase family. In terms of assembly, homodimer. Heterotetramer of two MnmE and two MnmG subunits. Requires K(+) as cofactor.

It is found in the cytoplasm. Functionally, exhibits a very high intrinsic GTPase hydrolysis rate. Involved in the addition of a carboxymethylaminomethyl (cmnm) group at the wobble position (U34) of certain tRNAs, forming tRNA-cmnm(5)s(2)U34. In Nitrosomonas eutropha (strain DSM 101675 / C91 / Nm57), this protein is tRNA modification GTPase MnmE.